Reading from the N-terminus, the 159-residue chain is Photosystem I reaction center subunit XI (159 aa).

A run of 3 helical transmembrane segments spans residues Leu53–Leu73, Leu84–Val104, and Phe125–Glu145.

The protein belongs to the PsaL family.

The protein resides in the cellular thylakoid membrane. The chain is Photosystem I reaction center subunit XI from Cyanothece sp. (strain PCC 7425 / ATCC 29141).